The primary structure comprises 115 residues: Class I hydrophobin C (115 aa).

The N-terminal stretch at 1 to 19 is a signal peptide; that stretch reads MFSRVLVAALVALPVLVSA. 4 cysteine pairs are disulfide-bonded: Cys-36–Cys-93, Cys-43–Cys-87, Cys-44–Cys-74, and Cys-94–Cys-108.

Belongs to the fungal hydrophobin family. In terms of assembly, self-assembles to form functional amyloid fibrils called rodlets. Self-assembly into fibrillar rodlets occurs spontaneously at hydrophobic:hydrophilic interfaces and the rodlets further associate laterally to form amphipathic monolayers.

Its subcellular location is the secreted. It localises to the cell wall. Its function is as follows. Aerial growth, conidiation, and dispersal of filamentous fungi in the environment rely upon a capability of their secreting small amphipathic proteins called hydrophobins (HPBs) with low sequence identity. Class I can self-assemble into an outermost layer of rodlet bundles on aerial cell surfaces, conferring cellular hydrophobicity that supports fungal growth, development and dispersal; whereas Class II form highly ordered films at water-air interfaces through intermolecular interactions but contribute nothing to the rodlet structure. The chain is Class I hydrophobin C from Agaricus bisporus (White button mushroom).